Reading from the N-terminus, the 377-residue chain is Chaperone protein DnaJ (377 aa).

The J domain occupies 5–69 (EYYDRLGLSK…QKRAAYDQYG (65 aa)). The segment at 133–215 (GAEKEIHYNR…CHGTGREKQS (83 aa)) adopts a CR-type zinc-finger fold. Zn(2+) contacts are provided by Cys146, Cys149, Cys163, Cys166, Cys189, Cys192, Cys203, and Cys206. CXXCXGXG motif repeat units lie at residues 146–153 (CKTCSGSG), 163–170 (CGRCHGHG), 189–196 (CDVCHGTG), and 203–210 (CQTCHGTG).

Belongs to the DnaJ family. Homodimer. It depends on Zn(2+) as a cofactor.

The protein localises to the cytoplasm. Functionally, participates actively in the response to hyperosmotic and heat shock by preventing the aggregation of stress-denatured proteins and by disaggregating proteins, also in an autonomous, DnaK-independent fashion. Unfolded proteins bind initially to DnaJ; upon interaction with the DnaJ-bound protein, DnaK hydrolyzes its bound ATP, resulting in the formation of a stable complex. GrpE releases ADP from DnaK; ATP binding to DnaK triggers the release of the substrate protein, thus completing the reaction cycle. Several rounds of ATP-dependent interactions between DnaJ, DnaK and GrpE are required for fully efficient folding. Also involved, together with DnaK and GrpE, in the DNA replication of plasmids through activation of initiation proteins. This is Chaperone protein DnaJ from Streptococcus thermophilus (strain CNRZ 1066).